The sequence spans 418 residues: Calreticulin (418 aa).

The signal sequence occupies residues 1-17 (MLLPVPLLLGLLGLAAA). Residues 18-197 (EPVVYFKEQF…NSQVESGSLE (180 aa)) are N-domain. Residue glutamine 26 participates in Ca(2+) binding. The residue at position 48 (lysine 48) is an N6-acetyllysine. Ca(2+)-binding residues include lysine 62 and lysine 64. Residue lysine 64 is modified to N6-(2-hydroxyisobutyryl)lysine. A disulfide bridge connects residues cysteine 105 and cysteine 137. An alpha-D-glucoside-binding residues include tyrosine 109, lysine 111, tyrosine 128, and aspartate 135. Residue lysine 159 is modified to N6-acetyllysine. A 1-1 repeat occupies 191-202 (VESGSLEDDWDF). Positions 191–255 (VESGSLEDDW…DAKKPEDWDE (65 aa)) are 4 X approximate repeats. Residues 193 to 277 (SGSLEDDWDF…NPEYKGEWKP (85 aa)) are disordered. The tract at residues 198 to 308 (DDWDFLPPKK…YSPDANIYAY (111 aa)) is P-domain. Residues 207–251 (KIKDPDASKPEDWDERAKIDDPTDSKPEDWDKPEHIPDPDAKKPE) are compositionally biased toward basic and acidic residues. Lysine 209 carries the N6-acetyllysine modification. Tandem repeats lie at residues 210-221 (DPDASKPEDWDE), 227-238 (DPTDSKPEDWDK), 244-255 (DPDAKKPEDWDE), 259-269 (GEWEPPVIQNP), 273-283 (GEWKPRQIDNP), and 287-297 (GTWIHPEIDNP). The segment at 237–270 (DKPEHIPDPDAKKPEDWDEEMDGEWEPPVIQNPE) is interaction with PPIB. Residues 252 to 261 (DWDEEMDGEW) show a composition bias toward acidic residues. The interval 259–297 (GEWEPPVIQNPEYKGEWKPRQIDNPDYKGTWIHPEIDNP) is 3 X approximate repeats. The C-domain stretch occupies residues 309–418 (DSFAVLGLDL…AAAGQAKDEL (110 aa)). Aspartate 317 lines the an alpha-D-glucoside pocket. Position 328 (aspartate 328) interacts with Ca(2+). The segment at 349-418 (VTKTAEKQMK…AAAGQAKDEL (70 aa)) is disordered. Basic and acidic residues predominate over residues 352–379 (TAEKQMKDKQDEEQRLKEEEEEKKRKEE). Positions 380–409 (EEAEEDEEDKDDKEDEDEDEEDKDEEEEEA) are enriched in acidic residues. The Prevents secretion from ER signature appears at 415-418 (KDEL).

It belongs to the calreticulin family. As to quaternary structure, monomer. Component of an EIF2 complex at least composed of CELF1/CUGBP1, CALR, CALR3, EIF2S1, EIF2S2, HSP90B1 and HSPA5. Interacts with PDIA3/ERp57 and SPACA9. Interacts with TRIM21. Interacts with NR3C1. Interacts with PPIB. Interacts (via P-domain) with PDIA5. Interacts with CLCC1.

The protein resides in the endoplasmic reticulum lumen. It localises to the cytoplasm. The protein localises to the cytosol. Its subcellular location is the secreted. It is found in the extracellular space. The protein resides in the extracellular matrix. It localises to the cell surface. The protein localises to the sarcoplasmic reticulum lumen. Its subcellular location is the cytoplasmic vesicle. It is found in the secretory vesicle. The protein resides in the cortical granule. It localises to the cytolytic granule. Functionally, calcium-binding chaperone that promotes folding, oligomeric assembly and quality control in the endoplasmic reticulum (ER) via the calreticulin/calnexin cycle. This lectin interacts transiently with almost all of the monoglucosylated glycoproteins that are synthesized in the ER. Interacts with the DNA-binding domain of NR3C1 and mediates its nuclear export. Involved in maternal gene expression regulation. May participate in oocyte maturation via the regulation of calcium homeostasis. Present in the cortical granules of non-activated oocytes, is exocytosed during the cortical reaction in response to oocyte activation and might participate in the block to polyspermy. The chain is Calreticulin (CALR) from Oryctolagus cuniculus (Rabbit).